The sequence spans 1395 residues: G2/mitotic-specific cyclin-B3 (1395 aa).

Residues 1-59 form a disordered region; it reads MLLPLPPQSSKPVPKKSQSSKIVPSHHDPSEKTGENCQTKISPSSLQESPSSLQGALKK. The segment covering 10-23 has biased composition (low complexity); the sequence is SKPVPKKSQSSKIV. The span at 25 to 34 shows a compositional bias: basic and acidic residues; it reads SHHDPSEKTG. Low complexity predominate over residues 42 to 54; the sequence is SPSSLQESPSSLQ. Residues 60 to 68 carry the D-box motif; sequence RSAFEDLTN. 2 disordered regions span residues 418–464 and 1074–1122; these read LSIK…PTEE and ATMT…DSSD. Positions 419–431 are enriched in basic and acidic residues; that stretch reads SIKEKPSTEKESF. Low complexity predominate over residues 1082–1093; the sequence is SRTTTESSACES.

It belongs to the cyclin family. Cyclin AB subfamily. As to quaternary structure, interacts with CDK2 kinase. Post-translationally, ubiquitinated. Ubiquitination leads to its degradation during anaphase entry, after degradation of CCNB1. Testis specific. In testis, it is expressed in developing germ cells, but not in Leydig cells. Weakly or not expressed in other tissues.

The protein localises to the nucleus. Functionally, cyclins are positive regulatory subunits of the cyclin-dependent kinases (CDKs), and thereby play an essential role in the control of the cell cycle, notably via their destruction during cell division. Its tissue specificity suggest that it may be required during early meiotic prophase I. This chain is G2/mitotic-specific cyclin-B3 (CCNB3), found in Homo sapiens (Human).